Consider the following 485-residue polypeptide: Sulfated surface glycoprotein 185 (485 aa).

Positions 1–20 are cleaved as a signal peptide; it reads MSKLLLVALFGAIAVVATSA. N193 carries an N-linked (GlcNAc...) asparagine glycan. The interval 212–317 is disordered; the sequence is LSGPNVNPIG…PPVPPPPSPP (106 aa). Pro residues-rich tracts occupy residues 221 to 234 and 241 to 317; these read GPAPNNSPLPPSPQ and PPSP…PSPP. N347 is a glycosylation site (N-linked (GlcNAc...) asparagine).

Polymer. Post-translationally, intersubunit cross-links are formed between saccharide chains rather than between polypeptide chains. Hydroxylated on proline residues in the Pro-rich central domain. In terms of processing, glycosylated; contains sulfate-substituted glycans.

The extracellular matrix (ECM) of Volvox contains insoluble fibrous layers that surround individual cells at a distance to form contiguous cellular compartments. SSG 185 is the monomeric precursor of this substructure (C3Z structure). The chain is Sulfated surface glycoprotein 185 from Volvox carteri (Green alga).